The sequence spans 64 residues: Large ribosomal subunit protein bL35 (64 aa).

Belongs to the bacterial ribosomal protein bL35 family.

The protein is Large ribosomal subunit protein bL35 of Coxiella burnetii (strain RSA 331 / Henzerling II).